The sequence spans 776 residues: Venom dipeptidyl peptidase 4 (776 aa).

Residues 1–25 (MVPLRSFVLLNSLFLVLLAARTVVT) form the signal peptide. Residues Asn-44, Asn-66, and Asn-329 are each glycosylated (N-linked (GlcNAc...) asparagine). Intrachain disulfides connect Cys-449/Cys-452 and Cys-462/Cys-480. N-linked (GlcNAc...) asparagine glycosylation is found at Asn-504 and Asn-577. Ser-638 acts as the Charge relay system in catalysis. Cys-658 and Cys-769 are oxidised to a cystine. N-linked (GlcNAc...) asparagine glycans are attached at residues Asn-688 and Asn-693. Active-site charge relay system residues include Asp-717 and His-749.

Belongs to the peptidase S9B family. DPPIV subfamily. Expressed by the venom gland.

Its subcellular location is the secreted. The catalysed reaction is Release of an N-terminal dipeptide, Xaa-Yaa-|-Zaa-, from a polypeptide, preferentially when Yaa is Pro, provided Zaa is neither Pro nor hydroxyproline.. Its activity is regulated as follows. Inhibited by diprotin A. In terms of biological role, venom dipeptidyl-peptidase which removes N-terminal dipeptides sequentially from polypeptides having unsubstituted N-termini provided that the penultimate residue is proline. May process venom proteins into their active forms and/or modulate the chemotactic activity of immune cells after the insect sting. This chain is Venom dipeptidyl peptidase 4, found in Vespula vulgaris (Yellow jacket).